The following is a 301-amino-acid chain: HTH-type transcriptional regulator AbaB (301 aa).

Residues 1–58 enclose the HTH lysR-type domain; it reads MDLALLRTFVTVHRAGSFTRAAALLGLSQPAVTSQIRTLERQLGRPLFLRQARGVTPT. Residues 18-37 constitute a DNA-binding region (H-T-H motif); that stretch reads FTRAAALLGLSQPAVTSQIR.

The protein belongs to the LysR transcriptional regulatory family.

In terms of biological role, putative regulator that may be involved in stimulating antibiotic production in S.antibioticus. This chain is HTH-type transcriptional regulator AbaB, found in Streptomyces antibioticus.